We begin with the raw amino-acid sequence, 204 residues long: Kunitz-type trypsin inhibitor KTI2 (204 aa).

Positions 1-25 (MKSTIFFALFLVCAFTISYLPSATA) are cleaved as a signal peptide. Cystine bridges form between cysteine 65/cysteine 112 and cysteine 160/cysteine 169.

The protein belongs to the protease inhibitor I3 (leguminous Kunitz-type inhibitor) family. In terms of tissue distribution, seed, and at low levels in leaf, root, and stem.

Functionally, has probably no trypsin inhibitor activity. KTi2 is responsible for most of the Kunitz trypsin inhibitor activity and protein found in soybean seeds. The protein is Kunitz-type trypsin inhibitor KTI2 (KTI2) of Glycine max (Soybean).